The primary structure comprises 302 residues: tRNA dimethylallyltransferase 1 (302 aa).

6–13 is a binding site for ATP; sequence GPTACGKT. 8-13 serves as a coordination point for substrate; it reads TACGKT. Interaction with substrate tRNA stretches follow at residues 31-34 and 154-158; these read DSRQ and QRAIR.

This sequence belongs to the IPP transferase family. As to quaternary structure, monomer. Mg(2+) serves as cofactor.

It carries out the reaction adenosine(37) in tRNA + dimethylallyl diphosphate = N(6)-dimethylallyladenosine(37) in tRNA + diphosphate. Catalyzes the transfer of a dimethylallyl group onto the adenine at position 37 in tRNAs that read codons beginning with uridine, leading to the formation of N6-(dimethylallyl)adenosine (i(6)A). This Porphyromonas gingivalis (strain ATCC 33277 / DSM 20709 / CIP 103683 / JCM 12257 / NCTC 11834 / 2561) protein is tRNA dimethylallyltransferase 1.